The following is a 196-amino-acid chain: Probable inactive nicotinamidase At3g16190 (196 aa).

The protein belongs to the isochorismatase family.

Its function is as follows. Does not possess nicotinamidase activity in vitro. In Arabidopsis thaliana (Mouse-ear cress), this protein is Probable inactive nicotinamidase At3g16190.